Here is a 329-residue protein sequence, read N- to C-terminus: Cytosolic Fe-S cluster assembly factor NBP35 (329 aa).

The segment at 1–33 (MAPSQVEDISKTELETPEHCPGPESEQAGKEDA) is disordered. Residues 8 to 18 (DISKTELETPE) show a composition bias toward basic and acidic residues. C20, C34, C37, and C43 together coordinate [4Fe-4S] cluster. 74-81 (GKGGVGKS) provides a ligand contact to ATP. [4Fe-4S] cluster is bound by residues C248 and C251.

Belongs to the Mrp/NBP35 ATP-binding proteins family. NUBP1/NBP35 subfamily. As to quaternary structure, heterotetramer of 2 NBP35 and 2 CFD1 chains. Requires [4Fe-4S] cluster as cofactor.

It localises to the cytoplasm. Its subcellular location is the nucleus. Functionally, component of the cytosolic iron-sulfur (Fe/S) protein assembly (CIA) machinery. Required for maturation of extramitochondrial Fe-S proteins. The NBP35-CFD1 heterotetramer forms a Fe-S scaffold complex, mediating the de novo assembly of an Fe-S cluster and its transfer to target apoproteins. Required for biogenesis and export of both ribosomal subunits, which may reflect a role in assembly of the Fe/S clusters in RLI1, a protein which performs rRNA processing and ribosome export. The sequence is that of Cytosolic Fe-S cluster assembly factor NBP35 from Debaryomyces hansenii (strain ATCC 36239 / CBS 767 / BCRC 21394 / JCM 1990 / NBRC 0083 / IGC 2968) (Yeast).